We begin with the raw amino-acid sequence, 229 residues long: UPF0758 protein CA_C1241 (229 aa).

The MPN domain maps to 107–229 (KITSPKEAAN…YISLKEEGLL (123 aa)). Residues H178, H180, and D191 each coordinate Zn(2+). Positions 178-191 (HNHPSGDPKPSNED) match the JAMM motif motif.

This sequence belongs to the UPF0758 family.

The protein is UPF0758 protein CA_C1241 of Clostridium acetobutylicum (strain ATCC 824 / DSM 792 / JCM 1419 / IAM 19013 / LMG 5710 / NBRC 13948 / NRRL B-527 / VKM B-1787 / 2291 / W).